The primary structure comprises 955 residues: UPF0182 protein PMT_0755 (955 aa).

The next 9 membrane-spanning stretches (helical) occupy residues 25-45 (LLLS…WLWF), 58-78 (WLWQ…CQLW), 107-127 (LLGC…LAWL), 146-166 (IWAL…MLGN), 178-198 (CFCF…ALAI), 214-234 (FGLG…AQLI), 264-284 (CNFL…LLWL), 313-333 (SLAS…TWIQ), and 340-360 (LIAS…APFV).

It belongs to the UPF0182 family.

The protein resides in the cell membrane. The polypeptide is UPF0182 protein PMT_0755 (Prochlorococcus marinus (strain MIT 9313)).